Reading from the N-terminus, the 59-residue chain is Large ribosomal subunit protein bL32 (59 aa).

It belongs to the bacterial ribosomal protein bL32 family.

This is Large ribosomal subunit protein bL32 from Limosilactobacillus reuteri (strain DSM 20016) (Lactobacillus reuteri).